The sequence spans 132 residues: DNA-directed RNA polymerase subunit omega (132 aa).

It belongs to the RNA polymerase subunit omega family. In terms of assembly, the RNAP catalytic core consists of 2 alpha, 1 beta, 1 beta' and 1 omega subunit. When a sigma factor is associated with the core the holoenzyme is formed, which can initiate transcription.

The catalysed reaction is RNA(n) + a ribonucleoside 5'-triphosphate = RNA(n+1) + diphosphate. Functionally, promotes RNA polymerase assembly. Latches the N- and C-terminal regions of the beta' subunit thereby facilitating its interaction with the beta and alpha subunits. This is DNA-directed RNA polymerase subunit omega from Ehrlichia ruminantium (strain Welgevonden).